The chain runs to 934 residues: Protein translocase subunit SecA (934 aa).

ATP is bound by residues glutamine 87, 105-109 (GEGKT), and aspartate 515. The Zn(2+) site is built by cysteine 918, cysteine 920, cysteine 929, and histidine 930.

It belongs to the SecA family. In terms of assembly, monomer and homodimer. Part of the essential Sec protein translocation apparatus which comprises SecA, SecYEG and auxiliary proteins SecDF-YajC and YidC. Zn(2+) serves as cofactor.

It is found in the cell inner membrane. The protein localises to the cytoplasm. It catalyses the reaction ATP + H2O + cellular proteinSide 1 = ADP + phosphate + cellular proteinSide 2.. Part of the Sec protein translocase complex. Interacts with the SecYEG preprotein conducting channel. Has a central role in coupling the hydrolysis of ATP to the transfer of proteins into and across the cell membrane, serving both as a receptor for the preprotein-SecB complex and as an ATP-driven molecular motor driving the stepwise translocation of polypeptide chains across the membrane. This chain is Protein translocase subunit SecA, found in Ralstonia nicotianae (strain ATCC BAA-1114 / GMI1000) (Ralstonia solanacearum).